Here is a 102-residue protein sequence, read N- to C-terminus: Antimicrobial peptide 1 (102 aa).

The first 26 residues, 1–26 (MASTKLFFSVITVMMLIAMASEMVNG), serve as a signal peptide directing secretion. 3 disulfide bridges follow: cysteine 37–cysteine 90, cysteine 47–cysteine 102, and cysteine 49–cysteine 75.

The protein localises to the secreted. Functionally, antimicrobial peptide which inhibits the growth of a variety of fungi, oomycetes, Gram-positive bacterial phytopatogenes and S.cerevisiae in vitro. No activity against E.coli. This chain is Antimicrobial peptide 1, found in Macadamia integrifolia (Macadamia nut).